A 743-amino-acid chain; its full sequence is Sulfhydryl oxidase 1 (743 aa).

Residues 1–42 (MWRRRARSGGGGGGGGGGAAPRCRWWPAVLALLAAALPAARS) form the signal peptide. The 124-residue stretch at 43–166 (RSLYSPSDPL…LRRAIITNLE (124 aa)) folds into the Thioredoxin domain. Active-site nucleophile residues include cysteine 80 and cysteine 83. 2 cysteine pairs are disulfide-bonded: cysteine 80/cysteine 83 and cysteine 111/cysteine 120. 5 N-linked (GlcNAc...) asparagine glycosylation sites follow: asparagine 254, asparagine 288, asparagine 295, asparagine 371, and asparagine 401. A disulfide bridge links cysteine 407 with cysteine 419. Residues 410–513 (SEPHFRGYPC…EDPQFPKLQW (104 aa)) enclose the ERV/ALR sulfhydryl oxidase domain. FAD contacts are provided by residues arginine 415, tryptophan 422, histidine 426, glutamate 461, histidine 465, 488-495 (WSHHNEVN), lysine 510, and tryptophan 513. A disulfide bridge connects residues cysteine 459 and cysteine 462. Residues cysteine 519 and cysteine 522 are joined by a disulfide bond. The tract at residues 567–617 (ASARLSTAGLREKEEEERKEEEEEGEKETEKPHREGETGRPGSSELRRPSI) is disordered. A compositionally biased stretch (acidic residues) spans 580–593 (EEEERKEEEEEGEK). Over residues 594–604 (ETEKPHREGET) the composition is skewed to basic and acidic residues. The helical transmembrane segment at 707–727 (SLCIALYFLSSMCLLGMYTFF) threads the bilayer.

Belongs to the quiescin-sulfhydryl oxidase (QSOX) family. FAD is required as a cofactor. Post-translationally, N-glycosylated. O-glycosylated on Thr and Ser residues.

The protein localises to the golgi apparatus membrane. Its subcellular location is the secreted. It carries out the reaction 2 R'C(R)SH + O2 = R'C(R)S-S(R)CR' + H2O2. Its function is as follows. Catalyzes the oxidation of sulfhydryl groups in peptide and protein thiols to disulfides with the reduction of oxygen to hydrogen peroxide. Plays a role in disulfide bond formation in a variety of extracellular proteins. In fibroblasts, required for normal incorporation of laminin into the extracellular matrix, and thereby for normal cell-cell adhesion and cell migration. The chain is Sulfhydryl oxidase 1 (QSOX1) from Gallus gallus (Chicken).